A 120-amino-acid polypeptide reads, in one-letter code: Probable early E4 13 kDa protein (120 aa).

The sequence is that of Probable early E4 13 kDa protein from Human adenovirus A serotype 12 (HAdV-12).